The sequence spans 131 residues: Glycine cleavage system H protein (131 aa).

In terms of domain architecture, Lipoyl-binding spans 24–106 (TVRVGITDYA…YGEGWLVDLR (83 aa)). Lysine 65 carries the N6-lipoyllysine modification.

It belongs to the GcvH family. As to quaternary structure, the glycine cleavage system is composed of four proteins: P, T, L and H. (R)-lipoate is required as a cofactor.

Its function is as follows. The glycine cleavage system catalyzes the degradation of glycine. The H protein shuttles the methylamine group of glycine from the P protein to the T protein. The chain is Glycine cleavage system H protein from Mycolicibacterium smegmatis (strain ATCC 700084 / mc(2)155) (Mycobacterium smegmatis).